The following is a 273-amino-acid chain: Hydroxynaphthalene reductase arp2 (273 aa).

NADP(+) is bound by residues isoleucine 24, aspartate 70, asparagine 97, and arginine 130. Residues serine 146 and serine 147 each act as proton donor in the active site. NADP(+) is bound by residues tyrosine 160, lysine 164, valine 193, and serine 195. Tyrosine 160 functions as the Proton acceptor in the catalytic mechanism. Lysine 164 acts as the Lowers pKa of active site Tyr in catalysis.

This sequence belongs to the short-chain dehydrogenases/reductases (SDR) family.

It is found in the endosome. The protein operates within pigment biosynthesis; melanin biosynthesis. Tricyclazole and pyroquilon inhibit arp2 hydroxynaphtalene reductase activity. In terms of biological role, hydroxynaphthalene reductase; part of the gene cluster that mediates the biosynthesis of dihydroxynaphthalene (DHN)-melanin, a bluish-green pigment and a structural component of the conidial wall. The first step of the pathway is the production of the heptaketide naphtopyrone YWA1 by the polyketide synthase alb1 though condensation of acetyl-CoA with malonyl-CoA. The naphtopyrone YWA1 is then converted to the pentaketide 1,3,6,8-tetrahydroxynaphthalene (1,3,6,8-THN) by the heptaketide hydrolyase ayg1 though chain-length shortening. 1,3,6,8-THN is substrate of the hydroxynaphthalene reductase arp2 to yield scytalone. The scytalone dehydratase arp1 then reduces scytalone to 1,3,8-THN. 1,3,8-THN is also substrate of the hydroxynaphthalene reductase arp2 to yield vermelone. Vermelone is further converted by the multicopper oxidase abr1 to 1,8-DHN. Finally the laccase abr2 transforms 1,8-DHN to DHN-melanin. DHN-melanin biosynthesis appears to be initiated in endosomes where early enzymes (abl1, ayg1, arp1 and arp2) localize, with exocytosis leading to melanin deposition on the cell surface where late enzymes (abr1 and abr2) localize. DHN-melanin is an important structural component of the outer cell wall and is required for the presence of conidial surface hydrophobins. DHN-melanin also plays a crucial role in fungal virulence, including a protective role against the host's immune defenses. DHN-melanin also protects conidia against amoeba predation. The protein is Hydroxynaphthalene reductase arp2 of Aspergillus fumigatus (strain ATCC MYA-4609 / CBS 101355 / FGSC A1100 / Af293) (Neosartorya fumigata).